The following is a 311-amino-acid chain: Ribonuclease Z (311 aa).

Residues His-61, His-63, Asp-65, His-66, His-139, Asp-210, and His-268 each contribute to the Zn(2+) site. Asp-65 (proton acceptor) is an active-site residue.

This sequence belongs to the RNase Z family. As to quaternary structure, homodimer. The cofactor is Zn(2+).

The catalysed reaction is Endonucleolytic cleavage of RNA, removing extra 3' nucleotides from tRNA precursor, generating 3' termini of tRNAs. A 3'-hydroxy group is left at the tRNA terminus and a 5'-phosphoryl group is left at the trailer molecule.. Zinc phosphodiesterase, which displays some tRNA 3'-processing endonuclease activity. Probably involved in tRNA maturation, by removing a 3'-trailer from precursor tRNA. The protein is Ribonuclease Z of Haloarcula marismortui (strain ATCC 43049 / DSM 3752 / JCM 8966 / VKM B-1809) (Halobacterium marismortui).